A 224-amino-acid chain; its full sequence is Lipoprotein-releasing system ATP-binding protein LolD (224 aa).

Residues 5 to 224 form the ABC transporter domain; sequence LEILDVSKCY…SLSGGMLTEL (220 aa). 40–47 contacts ATP; it reads GSSGSGKS.

This sequence belongs to the ABC transporter superfamily. Lipoprotein translocase (TC 3.A.1.125) family. As to quaternary structure, the complex is composed of two ATP-binding proteins (LolD) and two transmembrane proteins (LolC and LolE).

It localises to the cell inner membrane. Part of the ABC transporter complex LolCDE involved in the translocation of mature outer membrane-directed lipoproteins, from the inner membrane to the periplasmic chaperone, LolA. Responsible for the formation of the LolA-lipoprotein complex in an ATP-dependent manner. In Anaplasma marginale (strain St. Maries), this protein is Lipoprotein-releasing system ATP-binding protein LolD.